Here is a 296-residue protein sequence, read N- to C-terminus: Non-selective voltage-gated ion channel VDAC2 (296 aa).

ATP is bound at residue Lys25. Lys25 participates in a covalent cross-link: Glycyl lysine isopeptide (Lys-Gly) (interchain with G-Cter in ubiquitin). Position 26 is a phosphoserine (Ser26). ATP is bound at residue Lys33. Residue Lys33 is modified to N6-acetyllysine; alternate. Residue Lys33 is modified to N6-succinyllysine; alternate. A Glycyl lysine isopeptide (Lys-Gly) (interchain with G-Cter in ubiquitin); alternate cross-link involves residue Lys33. 2 beta stranded membrane passes run Leu39–Ser48 and Val52–Ser60. Glycyl lysine isopeptide (Lys-Gly) (interchain with G-Cter in ubiquitin) cross-links involve residues Lys66 and Lys74. A beta stranded transmembrane segment spans residues Val67 to Trp77. A Phosphotyrosine modification is found at Tyr80. 3 beta stranded membrane passes run Leu82–Asn89, Thr93–Asp102, and Leu108–Ser117. Phosphothreonine is present on Thr120. Lys122 is modified (N6-acetyllysine; alternate). Lys122 participates in a covalent cross-link: Glycyl lysine isopeptide (Lys-Gly) (interchain with G-Cter in ubiquitin); alternate. Lys123 is covalently cross-linked (Glycyl lysine isopeptide (Lys-Gly) (interchain with G-Cter in ubiquitin)). The next 4 membrane-spanning stretches (beta stranded) occupy residues Ser124–Arg133, Leu136–Asp143, Ala150–Gly158, and Leu163–Asp171. Lys174 participates in a covalent cross-link: Glycyl lysine isopeptide (Lys-Gly) (interchain with G-Cter in ubiquitin). The next 6 beta stranded transmembrane spans lie at Lys176–Thr188, Phe191–Asn198, Glu202–Val211, Leu215–Thr224, Arg231–Leu240, and Ala244–Asn251. The residue at position 206 (Ser206) is a Phosphoserine. The residue at position 253 (Ser253) is a Phosphoserine. NAD(+) is bound by residues Leu255 to Gly257 and Ser273 to Asp277. A run of 2 beta stranded transmembrane segments spans residues Leu255–Leu264 and Gly267–Ile276. Position 279 is an N6-acetyllysine; alternate (Lys279). Residue Lys279 forms a Glycyl lysine isopeptide (Lys-Gly) (interchain with G-Cter in ubiquitin); alternate linkage. The beta stranded transmembrane segment at His286–Glu295 threads the bilayer. A Glycyl lysine isopeptide (Lys-Gly) (interchain with G-Cter in ubiquitin) cross-link involves residue Lys287.

It belongs to the eukaryotic mitochondrial porin family. Monomer, homodimer and higher order oligomers; formation of higher order structures is necessary for scramblase activity. Post-translationally, ubiquitinated by PRKN during mitophagy, leading to its degradation and enhancement of mitophagy. Deubiquitinated by USP30.

The protein localises to the mitochondrion outer membrane. It localises to the membrane. It carries out the reaction chloride(in) = chloride(out). The catalysed reaction is K(+)(in) = K(+)(out). It catalyses the reaction a 1,2-diacyl-sn-glycero-3-phospho-L-serine(in) = a 1,2-diacyl-sn-glycero-3-phospho-L-serine(out). The enzyme catalyses a 1,2-diacyl-sn-glycero-3-phosphocholine(in) = a 1,2-diacyl-sn-glycero-3-phosphocholine(out). It carries out the reaction a 1,2-diacyl-sn-glycero-3-phospho-(1D-myo-inositol)(in) = a 1,2-diacyl-sn-glycero-3-phospho-(1D-myo-inositol)(out). Non-selective voltage-gated ion channel that mediates the transport of anions and cations through the mitochondrion outer membrane and plasma membrane. The channel adopts an open conformation at zero mV and a closed conformation at both positive and negative potentials. There are two populations of channels; the main that functions in a lower open-state conductance with lower ion selectivity, that switch, in a voltage-dependent manner, from the open to a low-conducting 'closed' state and the other that has a normal ion selectivity in the typical high conductance, 'open' state. Binds various lipids, including the sphingolipid ceramide, the phospholipid phosphatidylcholine, and the sterols cholesterol and oxysterol. Binding of ceramide promotes the mitochondrial outer membrane permeabilization (MOMP) apoptotic pathway. Functionally, catalyzes the scrambling of phospholipids across the outer mitochondrial membrane; the mechanism is unrelated to channel activity and is capable of translocating both anionic and zwitterionic phospholipids. This Meleagris gallopavo (Wild turkey) protein is Non-selective voltage-gated ion channel VDAC2.